The chain runs to 468 residues: ATP synthase subunit beta (468 aa).

155 to 162 is an ATP binding site; it reads GGAGVGKT.

Belongs to the ATPase alpha/beta chains family. As to quaternary structure, F-type ATPases have 2 components, CF(1) - the catalytic core - and CF(0) - the membrane proton channel. CF(1) has five subunits: alpha(3), beta(3), gamma(1), delta(1), epsilon(1). CF(0) has three main subunits: a(1), b(2) and c(9-12). The alpha and beta chains form an alternating ring which encloses part of the gamma chain. CF(1) is attached to CF(0) by a central stalk formed by the gamma and epsilon chains, while a peripheral stalk is formed by the delta and b chains.

The protein localises to the cell membrane. The catalysed reaction is ATP + H2O + 4 H(+)(in) = ADP + phosphate + 5 H(+)(out). Functionally, produces ATP from ADP in the presence of a proton gradient across the membrane. The catalytic sites are hosted primarily by the beta subunits. The protein is ATP synthase subunit beta of Streptococcus suis (strain 98HAH33).